The sequence spans 484 residues: Cobyric acid synthase (484 aa).

One can recognise a GATase cobBQ-type domain in the interval 249 to 438 (QLRVAVPVFT…LHGIFDRPET (190 aa)). Catalysis depends on cysteine 330, which acts as the Nucleophile. Histidine 430 is an active-site residue.

This sequence belongs to the CobB/CobQ family. CobQ subfamily.

The protein operates within cofactor biosynthesis; adenosylcobalamin biosynthesis. In terms of biological role, catalyzes amidations at positions B, D, E, and G on adenosylcobyrinic A,C-diamide. NH(2) groups are provided by glutamine, and one molecule of ATP is hydrogenolyzed for each amidation. The polypeptide is Cobyric acid synthase (Vibrio cholerae serotype O1 (strain ATCC 39315 / El Tor Inaba N16961)).